We begin with the raw amino-acid sequence, 292 residues long: Zinc finger protein OZF (292 aa).

10 consecutive C2H2-type zinc fingers follow at residues 16–38 (FACK…EHFH), 44–66 (FECN…QNTH), 72–94 (FECN…QKIH), 100–122 (FECK…QRTH), 128–150 (FVCK…EKIH), 156–178 (FKCS…QNIH), 184–206 (YECN…VRIH), 212–234 (YECN…VRSH), 240–262 (YGCN…LRIH), and 268–290 (YQCS…QKIH). Glycyl lysine isopeptide (Lys-Gly) (interchain with G-Cter in SUMO2) cross-links involve residues Lys28, Lys51, and Lys56. Glycyl lysine isopeptide (Lys-Gly) (interchain with G-Cter in SUMO) cross-links involve residues Lys157 and Lys169. Lys173 participates in a covalent cross-link: Glycyl lysine isopeptide (Lys-Gly) (interchain with G-Cter in SUMO2). The segment at 212–292 (YECNVCGKAF…HIRHQKIHTH (81 aa)) is interaction with TERF2IP.

This sequence belongs to the krueppel C2H2-type zinc-finger protein family. Binds DNA. Interacts with SUMO conjugating enzyme UBC9/UBE2I. Interacts with the telomeric protein TERF2IP. Post-translationally, sumoylated. As to expression, liver, skeletal and heart muscle, mammary cells. Very low levels in brain, lung, placenta and kidney. Strongly overexpressed in many pancreas and colorectal cancers. Increased gene copy numbers are detected in 3 of 12 tumor cell lines and 2 of 12 primary pancreatic carcinomas. Overexpressed in 80% of colorectal cancers.

The protein localises to the nucleus. The protein is Zinc finger protein OZF (ZNF146) of Homo sapiens (Human).